A 593-amino-acid polypeptide reads, in one-letter code: Glyoxylate carboligase (593 aa).

This sequence belongs to the TPP enzyme family. As to quaternary structure, homotetramer. Requires Mg(2+) as cofactor. Thiamine diphosphate is required as a cofactor.

It carries out the reaction 2 glyoxylate + H(+) = 2-hydroxy-3-oxopropanoate + CO2. Its pathway is organic acid metabolism; glycolate degradation; 3-phospho-D-glycerate from glycolate: step 2/4. Catalyzes the condensation of two molecules of glyoxylate to give 2-hydroxy-3-oxopropanoate (also termed tartronate semialdehyde). This is Glyoxylate carboligase (gcl) from Escherichia coli O157:H7.